The sequence spans 418 residues: Xanthosine permease (418 aa).

The Cytoplasmic portion of the chain corresponds to 1–9 (MSIAMRLKV). Residues 10 to 30 (MSFLQYFIWGSWLVTLGSYMI) traverse the membrane as a helical segment. At 31 to 41 (NTLHFTGANVG) the chain is on the periplasmic side. Residues 42–62 (MVYSSKGIAAIIMPGIMGIIA) traverse the membrane as a helical segment. The Cytoplasmic portion of the chain corresponds to 63 to 70 (DKWLRAER). 2 helical membrane-spanning segments follow: residues 71–91 (AYML…SVTD) and 92–112 (PDMM…TIAL). Over 113–136 (SNSVSYSCLAQAGLDPVTAFPPIR) the chain is Cytoplasmic. The chain crosses the membrane as a helical span at residues 137 to 157 (VFGTVGFIVAMWAVSLLHLEL). Over 158–159 (SS) the chain is Periplasmic. The helical transmembrane segment at 160 to 180 (LQLYIASGASLLLSAYALTLP) threads the bilayer. Residues 181–209 (KIPVAEKKATTSLASKLGLDAFVLFKNPR) are Cytoplasmic-facing. Residues 210 to 230 (MAIFFLFAMMLGAVLQITNVF) form a helical membrane-spanning segment. Residues 231-254 (GNPFLHDFARNPEFADSFVVKYPS) are Periplasmic-facing. The chain crosses the membrane as a helical span at residues 255-275 (ILLSVSQMAEVGFILTIPFFL). At 276 to 277 (KR) the chain is on the cytoplasmic side. The chain crosses the membrane as a helical span at residues 278 to 298 (FGIKTVMLMSMVAWTLRFGFF). Residues 299–306 (AYGDPSTT) lie on the Periplasmic side of the membrane. The chain crosses the membrane as a helical span at residues 307-327 (GFILLLLSMIVYGCAFDFFNI). Over 328-348 (SGSVFVEQEVDSSIRASAQGL) the chain is Cytoplasmic. The helical transmembrane segment at 349-369 (FMTMVNGVGAWVGSILSGMAV) threads the bilayer. Over 370–381 (DYFSVDGVKDWQ) the chain is Periplasmic. A helical transmembrane segment spans residues 382–402 (TIWLVFAGYALFLAVIFFFGF). The Cytoplasmic segment spans residues 403 to 418 (KYNHDPEKIKHRAVTH).

Belongs to the major facilitator superfamily. Nucleoside:H(+) symporter (NHS) (TC 2.A.1.10) family.

Its subcellular location is the cell inner membrane. It carries out the reaction xanthosine(in) + H(+)(in) = xanthosine(out) + H(+)(out). Its activity is regulated as follows. Transport is abolished by the proton uncoupler 2,4-dinitrophenol. Uptake of xanthosine. Can also transport other nucleosides such as inosine, adenosine, cytidine, uridine and thymidine. Transport is driven by a proton motive force. This Escherichia coli (strain K12) protein is Xanthosine permease.